Here is a 197-residue protein sequence, read N- to C-terminus: Putative manganese efflux pump MntP (197 aa).

Helical transmembrane passes span 8–28 (VILL…GLGA), 43–63 (VYAA…GYLL), 66–86 (VLLG…LIVL), 123–143 (LAIA…LLAL), 146–166 (WLAC…GIYL), and 177–197 (KAEI…MLFS).

This sequence belongs to the MntP (TC 9.B.29) family.

The protein localises to the cell inner membrane. Functionally, probably functions as a manganese efflux pump. The sequence is that of Putative manganese efflux pump MntP from Psychrobacter arcticus (strain DSM 17307 / VKM B-2377 / 273-4).